A 245-amino-acid chain; its full sequence is Carbohydrate deacetylase (245 aa).

The Mg(2+) site is built by H59 and H121.

It belongs to the YdjC deacetylase family. As to quaternary structure, homodimer. Requires Mg(2+) as cofactor.

Functionally, probably catalyzes the deacetylation of acetylated carbohydrates an important step in the degradation of oligosaccharides. The protein is Carbohydrate deacetylase of Clostridium beijerinckii (strain ATCC 51743 / NCIMB 8052) (Clostridium acetobutylicum).